Here is a 1002-residue protein sequence, read N- to C-terminus: Carboxypeptidase Y (1002 aa).

The signal sequence occupies residues 1-18 (MLMKQTFLYFLLTCVVSA). A propeptide spanning residues 19-521 (QFNGYVPPEQ…AYLEMLKAEG (503 aa)) is cleaved from the precursor. 3 disordered regions span residues 51–91 (QEES…TALE), 124–436 (DEDE…NMQS), and 527–546 (AFRD…ADSS). Composition is skewed to basic and acidic residues over residues 63 to 81 (PERD…HEFN) and 127 to 143 (EHVR…EDAP). The span at 144-170 (RRKHGKCKGKGKHHKGKHAKGKGKKSH) shows a compositional bias: basic residues. Residues 171-205 (PKPEDDSVFFDDERPKHHEFDDEDREFPAHHEPGE) show a composition bias toward basic and acidic residues. Repeat copies occupy residues 225–237 (MHHE…PPPP), 238–250 (MHHE…PPPP), 251–263 (MHHE…PPPP), 264–276 (MHHE…PPPP), 277–289 (MHHE…PPPP), 290–302 (MHHE…PPPP), 303–315 (MHHE…PPPP), 316–328 (MHHE…PPPP), 329–341 (MHHE…PPPP), 361–369 (DKEHHKGPK), 370–378 (DKEHHKGPK), 379–387 (DKEHHKGPK), 388–396 (DKEHHKGPK), 397–405 (DKEHHKGPK), and 406–414 (DKEHHKGPK). The interval 225-341 (MHHEPGEHMP…EPGEHMPPPP (117 aa)) is 9 X 13 AA tandem repeats of M-H-H-E-P-G-E-H-M-P-P-P-P. Over residues 343–431 (KHHELEEHEG…PKEKHNERPE (89 aa)) the composition is skewed to basic and acidic residues. The tract at residues 361-423 (DKEHHKGPKD…KDKEHHQGPK (63 aa)) is 7 X 9 AA tandem repeats of D-K-E-H-H-K-G-P-K. One copy of the 2-7; approximate repeat lies at 415–423 (DKEHHQGPK). Cystine bridges form between cysteine 627–cysteine 880, cysteine 776–cysteine 789, cysteine 799–cysteine 822, cysteine 806–cysteine 815, and cysteine 844–cysteine 851. N-linked (GlcNAc...) asparagine glycosylation occurs at asparagine 659. Serine 715 is an active-site residue. Aspartate 921 is an active-site residue. Cysteine 924 contacts substrate. Histidine 978 is a catalytic residue. Methionine 979 lines the substrate pocket.

It belongs to the peptidase S10 family. As to quaternary structure, heterodimer of two subunits of 32 kDa and 19 kDa derived from the precursor protein and linked by a disulfide bond.

Its subcellular location is the vacuole. It catalyses the reaction Release of a C-terminal amino acid with broad specificity.. Functionally, involved in degradation of small peptides. Digests preferentially peptides containing an aliphatic or hydrophobic residue in P1' position, as well as methionine, leucine or phenylalanine in P1 position of ester substrate. In Schizosaccharomyces pombe (strain 972 / ATCC 24843) (Fission yeast), this protein is Carboxypeptidase Y (cpy1).